Reading from the N-terminus, the 446-residue chain is Adenylosuccinate synthetase (446 aa).

GTP-binding positions include 21–27 (GDEGKGK) and 49–51 (GHT). D22 serves as the catalytic Proton acceptor. Residues D22 and G49 each coordinate Mg(2+). Residues 22–25 (DEGK), 47–50 (NAGH), T141, R155, Q236, T251, and R319 contribute to the IMP site. H50 serves as the catalytic Proton donor. A substrate-binding site is contributed by 315–321 (VTTGRSR). GTP contacts are provided by residues R321, 347 to 349 (KLD), and 429 to 431 (STS).

Belongs to the adenylosuccinate synthetase family. In terms of assembly, homodimer. Mg(2+) serves as cofactor.

The protein localises to the cytoplasm. The enzyme catalyses IMP + L-aspartate + GTP = N(6)-(1,2-dicarboxyethyl)-AMP + GDP + phosphate + 2 H(+). It participates in purine metabolism; AMP biosynthesis via de novo pathway; AMP from IMP: step 1/2. Its function is as follows. Plays an important role in the de novo pathway of purine nucleotide biosynthesis. Catalyzes the first committed step in the biosynthesis of AMP from IMP. In Polaromonas naphthalenivorans (strain CJ2), this protein is Adenylosuccinate synthetase.